Consider the following 602-residue polypeptide: MREHLNHLHKKVQELPTTSGCYKMYSQNNKILYIGKAKNLRARVKNYFLKRISHKTKILMRNVANIEVITTNSEYEALLLECNLIKEYKPDYNIKLKDDKGYPMIRITCEKYPRIFKTRKIINDGSEYFGPYVNAKNLDLVLDLINKTFKTRKCKKKSKTPCLYFHMGQCLGVCYREDLEEQYKKEVDKIRHILNGKISKLLDETEIKMKEAIKKEDFEAAIKLKETKRSLIEISQTQIITRMNKLSADYIYIHQTDSLNAIVILKYKDGKLVEKDINFDESIYEEDELTAKFITQYYTALNMIVPNKIYIFKKIETENITKLINELKNTKTEIICEETKETIKIMEMAISNAKIALREYDNEKNRALESLKNILEMTKLPKTIEGFDISHLNGHKTVASLVSFKMGKPFKDGYRVYKINSLNNGEIDDLKAIKEVISRRYSKLINEQLALPDLILIDGGKGQLSAAYSILKGLKIENEVIVCALAKKEEIIFLPNKTQGIKLSKGNPALQILQNVRDEAHRRANSFNRTLRRNIKLNYSKIKGIGEEKAKNILKTLGTYKDILLLNEDEIAKKMKINIKMAKKIKKFSEDQNLKNTYSIKS.

A GIY-YIG domain is found at 17–94 (TTSGCYKMYS…IKEYKPDYNI (78 aa)). The UVR domain occupies 199–234 (SKLLDETEIKMKEAIKKEDFEAAIKLKETKRSLIEI).

Belongs to the UvrC family. As to quaternary structure, interacts with UvrB in an incision complex.

The protein localises to the cytoplasm. In terms of biological role, the UvrABC repair system catalyzes the recognition and processing of DNA lesions. UvrC both incises the 5' and 3' sides of the lesion. The N-terminal half is responsible for the 3' incision and the C-terminal half is responsible for the 5' incision. The polypeptide is UvrABC system protein C (Borrelia hermsii (strain HS1 / DAH)).